Consider the following 304-residue polypeptide: Porphobilinogen deaminase (304 aa).

Cys240 carries the S-(dipyrrolylmethanemethyl)cysteine modification.

This sequence belongs to the HMBS family. Monomer. Requires dipyrromethane as cofactor.

The enzyme catalyses 4 porphobilinogen + H2O = hydroxymethylbilane + 4 NH4(+). It participates in porphyrin-containing compound metabolism; protoporphyrin-IX biosynthesis; coproporphyrinogen-III from 5-aminolevulinate: step 2/4. In terms of biological role, tetrapolymerization of the monopyrrole PBG into the hydroxymethylbilane pre-uroporphyrinogen in several discrete steps. The polypeptide is Porphobilinogen deaminase (Xanthomonas campestris pv. campestris (strain ATCC 33913 / DSM 3586 / NCPPB 528 / LMG 568 / P 25)).